We begin with the raw amino-acid sequence, 968 residues long: Glycine dehydrogenase (decarboxylating) (968 aa).

Lysine 717 bears the N6-(pyridoxal phosphate)lysine mark.

Belongs to the GcvP family. In terms of assembly, the glycine cleavage system is composed of four proteins: P, T, L and H. Pyridoxal 5'-phosphate is required as a cofactor.

The catalysed reaction is N(6)-[(R)-lipoyl]-L-lysyl-[glycine-cleavage complex H protein] + glycine + H(+) = N(6)-[(R)-S(8)-aminomethyldihydrolipoyl]-L-lysyl-[glycine-cleavage complex H protein] + CO2. The glycine cleavage system catalyzes the degradation of glycine. The P protein binds the alpha-amino group of glycine through its pyridoxal phosphate cofactor; CO(2) is released and the remaining methylamine moiety is then transferred to the lipoamide cofactor of the H protein. The polypeptide is Glycine dehydrogenase (decarboxylating) (Tropheryma whipplei (strain TW08/27) (Whipple's bacillus)).